A 523-amino-acid polypeptide reads, in one-letter code: NAD(P)H-quinone oxidoreductase subunit 2 (523 aa).

A run of 13 helical transmembrane segments spans residues 29–49 (AVLP…VDLA), 57–77 (WVPP…ALQW), 94–114 (LAVA…LISW), 132–152 (LAAT…SIFI), 182–202 (LLVG…LYGL), 221–241 (PIAA…IAAV), 255–275 (PTPV…ALAL), 291–311 (LLFT…ALAQ), 317–337 (MLAY…VCGT), 345–365 (VLYM…IILF), 389–409 (LGLS…GFFG), 424–444 (LLVV…ISVI), and 477–497 (VALI…NPLF).

This sequence belongs to the complex I subunit 2 family. NDH-1 can be composed of about 15 different subunits; different subcomplexes with different compositions have been identified which probably have different functions.

Its subcellular location is the cellular thylakoid membrane. The enzyme catalyses a plastoquinone + NADH + (n+1) H(+)(in) = a plastoquinol + NAD(+) + n H(+)(out). The catalysed reaction is a plastoquinone + NADPH + (n+1) H(+)(in) = a plastoquinol + NADP(+) + n H(+)(out). In terms of biological role, NDH-1 shuttles electrons from an unknown electron donor, via FMN and iron-sulfur (Fe-S) centers, to quinones in the respiratory and/or the photosynthetic chain. The immediate electron acceptor for the enzyme in this species is believed to be plastoquinone. Couples the redox reaction to proton translocation, and thus conserves the redox energy in a proton gradient. Cyanobacterial NDH-1 also plays a role in inorganic carbon-concentration. The sequence is that of NAD(P)H-quinone oxidoreductase subunit 2 from Synechococcus sp. (strain CC9902).